The following is a 223-amino-acid chain: Germin-like protein subfamily 1 member 10 (223 aa).

An N-terminal signal peptide occupies residues 1–24 (MAMKSLSFLAALSLLALTLPLTIA). Cys34 and Cys51 are oxidised to a cystine. Asn38 carries N-linked (GlcNAc...) asparagine glycosylation. In terms of domain architecture, Cupin type-1 spans 65–215 (PGLQTARPIT…AFQVDPRVVM (151 aa)). The Mn(2+) site is built by His113, His115, Glu120, and His161.

The protein belongs to the germin family. In terms of assembly, oligomer (believed to be a pentamer but probably hexamer).

Its subcellular location is the secreted. It localises to the extracellular space. It is found in the apoplast. May play a role in plant defense. Probably has no oxalate oxidase activity even if the active site is conserved. The protein is Germin-like protein subfamily 1 member 10 of Arabidopsis thaliana (Mouse-ear cress).